A 440-amino-acid chain; its full sequence is MSIEVKMPALSPTMTEGTLAKWLVKEGDAVKAGDILAEIETDKAIMEFETVDAGIIAKILVPEGSENIAVGQVIAVMAEAGEDVSQVAASASSQISEPSEKADVAQKETADSETISIDASLDKAISNAGYGNKTENMTASYQEKAGRIKASPLAKRLAKKNHVDLKQVNGSGPHGRIIKADIEAFIAEANQASSNPSVSTPEASGKITHDTPHNSIKLSNMRRVIARRLTESKQNIPHIYLTVDVQMDALLKLRSELNESLAVQNIKISVNDMLIKAQALALKATPNVNVAFDGDQMLQFSQADISVAVSVEGGLITPILKQADTKSLSALSVEMKELIARAREGRLQPQEYQGGTSSISNMGMFGIKQFNAVINPPQASILAIGSGERRPWVIDDAITIATVATITGSFDHRVIDGADAAAFMSAFKHLVEKPLGILAQ.

The 77-residue stretch at 2-78 folds into the Lipoyl-binding domain; that stretch reads SIEVKMPALS…AVGQVIAVMA (77 aa). K43 is modified (N6-lipoyllysine). Residues 91–113 are disordered; that stretch reads ASSQISEPSEKADVAQKETADSE. A compositionally biased stretch (basic and acidic residues) spans 98–110; sequence PSEKADVAQKETA. Residues 149–186 enclose the Peripheral subunit-binding (PSBD) domain; the sequence is KASPLAKRLAKKNHVDLKQVNGSGPHGRIIKADIEAFI. Residues 192 to 202 show a composition bias toward polar residues; the sequence is ASSNPSVSTPE. Residues 192-214 form a disordered region; the sequence is ASSNPSVSTPEASGKITHDTPHN. H412 is an active-site residue.

The protein belongs to the 2-oxoacid dehydrogenase family. As to quaternary structure, forms a 24-polypeptide structural core with octahedral symmetry. It depends on (R)-lipoate as a cofactor.

The enzyme catalyses N(6)-[(R)-dihydrolipoyl]-L-lysyl-[protein] + acetyl-CoA = N(6)-[(R)-S(8)-acetyldihydrolipoyl]-L-lysyl-[protein] + CoA. The pyruvate dehydrogenase complex catalyzes the overall conversion of pyruvate to acetyl-CoA and CO(2). It contains multiple copies of three enzymatic components: pyruvate dehydrogenase (E1), dihydrolipoamide acetyltransferase (E2) and lipoamide dehydrogenase (E3). This Zymomonas mobilis subsp. mobilis (strain ATCC 31821 / ZM4 / CP4) protein is Dihydrolipoyllysine-residue acetyltransferase component of pyruvate dehydrogenase complex (pdhC).